A 346-amino-acid chain; its full sequence is MSFRTIEWRDDAVIMIDQTRLPMEEVYQRYTDFNAVAEAIRGMVVRGAPAIGVAAAMGVALGAREIIADTQESFFRQLENVCDVMARTRPTAVNLFWAIERMKQKALSLKGNPLETIRTGLKEEAIRIEAEDLAICKNIGRHGADLIPEGATILTHCNAGGLATAGYGTALGVIRAAHEAGKRIQVFSDETRPWLQGARLTTWELMKDSIPVTLISDNMAGFFMSRGEITCCVVGADRIAANGDTANKIGTFSVAVLAREHGIPFYVAAPVSTLDLSLADGSRIPIEERPSTEVTHIRGLPIAPEGVKVRNPSFDVTPAKYITAIITEYGVARGNYTQELAALAAV.

Substrate is bound by residues 46–48 (RGA), arginine 89, and glutamine 196. The Proton donor role is filled by aspartate 237. 247–248 (NK) contributes to the substrate binding site.

The protein belongs to the eIF-2B alpha/beta/delta subunits family. MtnA subfamily.

The enzyme catalyses 5-(methylsulfanyl)-alpha-D-ribose 1-phosphate = 5-(methylsulfanyl)-D-ribulose 1-phosphate. It functions in the pathway amino-acid biosynthesis; L-methionine biosynthesis via salvage pathway; L-methionine from S-methyl-5-thio-alpha-D-ribose 1-phosphate: step 1/6. Its function is as follows. Catalyzes the interconversion of methylthioribose-1-phosphate (MTR-1-P) into methylthioribulose-1-phosphate (MTRu-1-P). The protein is Methylthioribose-1-phosphate isomerase of Trichlorobacter lovleyi (strain ATCC BAA-1151 / DSM 17278 / SZ) (Geobacter lovleyi).